A 70-amino-acid polypeptide reads, in one-letter code: Small ribosomal subunit protein bS21 (70 aa).

Belongs to the bacterial ribosomal protein bS21 family.

This chain is Small ribosomal subunit protein bS21, found in Paracidovorax citrulli (strain AAC00-1) (Acidovorax citrulli).